The following is a 266-amino-acid chain: Regulatory protein RecX (266 aa).

Belongs to the RecX family.

It is found in the cytoplasm. Functionally, modulates RecA activity. This is Regulatory protein RecX from Enterococcus faecalis (strain ATCC 700802 / V583).